Here is a 41-residue protein sequence, read N- to C-terminus: ORF3c protein (41 aa).

May play a role in host modulation. The sequence is that of ORF3c protein from Severe acute respiratory syndrome coronavirus 2 (2019-nCoV).